Consider the following 114-residue polypeptide: Iron-sulfur cluster insertion protein ErpA (114 aa).

The iron-sulfur cluster site is built by cysteine 42, cysteine 106, and cysteine 108.

This sequence belongs to the HesB/IscA family. In terms of assembly, homodimer. The cofactor is iron-sulfur cluster.

Its function is as follows. Required for insertion of 4Fe-4S clusters for at least IspG. This chain is Iron-sulfur cluster insertion protein ErpA, found in Haemophilus ducreyi (strain 35000HP / ATCC 700724).